The primary structure comprises 154 residues: Superoxide dismutase [Cu-Zn] (154 aa).

Cu cation contacts are provided by histidine 47, histidine 49, and histidine 64. Cysteine 58 and cysteine 147 form a disulfide bridge. Residues histidine 64, histidine 72, histidine 81, and aspartate 84 each contribute to the Zn(2+) site. Residue histidine 121 participates in Cu cation binding. Residues 125–136 (DDLGKGGNEESL) are compositionally biased toward basic and acidic residues. The segment at 125–144 (DDLGKGGNEESLKTGNAGPR) is disordered. Arginine 144 provides a ligand contact to substrate.

This sequence belongs to the Cu-Zn superoxide dismutase family. In terms of assembly, homodimer. Cu cation is required as a cofactor. It depends on Zn(2+) as a cofactor.

The protein localises to the cytoplasm. It catalyses the reaction 2 superoxide + 2 H(+) = H2O2 + O2. Functionally, destroys radicals which are normally produced within the cells and which are toxic to biological systems. The polypeptide is Superoxide dismutase [Cu-Zn] (SOD1) (Cordyceps tenuipes (Entomopathogenic fungus)).